A 132-amino-acid polypeptide reads, in one-letter code: Ig kappa chain V-III region MOPC 321 (132 aa).

A signal peptide spans 1-20; sequence METDTLLLWVLLLWVPGSTG. The interval 21–43 is framework-1; that stretch reads DIVLTQSPASLAVSLGQRATISC. A disulfide bridge links Cys43 with Cys112. Residues 44–58 form a complementarity-determining-1 region; it reads RASKSVNTYGNSFMZ. Residues 59 to 73 are framework-2; the sequence is WYZZKPGZPPKLLIY. The complementarity-determining-2 stretch occupies residues 74–80; it reads RASNLZS. A framework-3 region spans residues 81–112; that stretch reads GIPARFSGSGSRTBFTLTIBPVZABDVATYFC. The tract at residues 113-121 is complementarity-determining-3; it reads ZZSBZBPWT. Residues 122–131 are framework-4; the sequence is FGSGTKLEIK.

This is Ig kappa chain V-III region MOPC 321 from Mus musculus (Mouse).